The chain runs to 446 residues: Cytochrome P450 monooxygenase ATR14 (446 aa).

A disordered region spans residues 403-446; sequence NFTYPDEFRPDRWLDDRDQKEYEHDHGDAMQPFSVGPRDCPSQK. The segment covering 408–430 has biased composition (basic and acidic residues); it reads DEFRPDRWLDDRDQKEYEHDHGD. Residue cysteine 442 participates in heme binding.

The protein belongs to the cytochrome P450 family. Heme serves as cofactor.

Its pathway is mycotoxin biosynthesis. Cytochrome P450 monooxygenase; part of the core atranone cluster (CAC) which products are predicted to catalyze most or all steps of mycotoxin atranone synthesis, starting from geranylgeranyl pyrophosphate (GGPP). The initial cyclization of GGPP to dolabellane is probably performed by the terpene cyclase ATR13. The Baeyer-Villiger oxidation near the end of the atranone synthesis, which converts atranones D and E to atranones F and G is predicted to be catalyzed by the monooxygenase ATR8. Of the CAC's other predicted gene products, the reducing PKS ATR6 might synthesize a polyketide chain. This polyketide is probably transferred onto the atranone backbone by the polyketide transferase ATR5. Other predicted CAC products include 4 oxygenases (ATR2, ATR3, ATR4, and ATR14), 3 short-chain reductases (ATR7, ATR9, and ATR10), and a methyltransferase (ATR12). These may all be involved in the various steps of atranone biosynthesis, although their specific roles must await experimental determination. The polypeptide is Cytochrome P450 monooxygenase ATR14 (Stachybotrys chlorohalonatus (strain IBT 40285)).